A 361-amino-acid chain; its full sequence is uncharacterized protein (361 aa).

Thr-12 is subject to Phosphothreonine.

It is found in the cytoplasm. It localises to the nucleus. This is an uncharacterized protein from Schizosaccharomyces pombe (strain 972 / ATCC 24843) (Fission yeast).